We begin with the raw amino-acid sequence, 95 residues long: Large ribosomal subunit protein bL28 (95 aa).

Belongs to the bacterial ribosomal protein bL28 family.

The protein is Large ribosomal subunit protein bL28 of Dinoroseobacter shibae (strain DSM 16493 / NCIMB 14021 / DFL 12).